A 472-amino-acid chain; its full sequence is MEGGRLGGAAASASAAAAADARGGMSGFAAPQHAIHTNLNNVQPTQVTDFGALAQSAGFRIEDLANLSTNGLFNLKSNAHTIINDPLQFENYVKSISPSNITTTATVTVVDPQTLVPQKGAQLNLVTIRTGNVENWGESTIADTSPRTDTSTDPDTDERNQMFEQGQLAAPTASDSSDRSKDKLDHKTLRRLAQNREAARKSRLRKKAYIQNLESSRLKLTQIEQELQRARQQGIFISTSSDQSHSASGNGALAFDMEYARWLEEHNKHINELRAAVNAHAGDNDLKSTVDSIMAHYNEIFKLKGVAAKADVFHVLSGMWKTPAERCFMWLGGFRSSELLKLLAGQLEPLTEQQLAGIANLQQSSQQAEDALSQGMEALQQSLAETLASGSLGPAGSSGNVANYMGQMAMAMGKLGTLENFLRQADNLRLQTLQQMQRILTTRQSARALLAISDYFSRLRALSSLWLARPRE.

The disordered stretch occupies residues 136 to 190 (WGESTIADTSPRTDTSTDPDTDERNQMFEQGQLAAPTASDSSDRSKDKLDHKTLR). Positions 143–153 (DTSPRTDTSTD) are enriched in low complexity. The segment covering 176-187 (SSDRSKDKLDHK) has biased composition (basic and acidic residues). In terms of domain architecture, bZIP spans 185–229 (DHKTLRRLAQNREAARKSRLRKKAYIQNLESSRLKLTQIEQELQR). The segment at 187-207 (KTLRRLAQNREAARKSRLRKK) is basic motif. The interval 213–227 (LESSRLKLTQIEQEL) is leucine-zipper. One can recognise a DOG1 domain in the interval 252–469 (ALAFDMEYAR…RALSSLWLAR (218 aa)).

The protein belongs to the bZIP family. In terms of assembly, isoforms 1 and 2 interact with NPR2/NH2. Isoform 2 interacts with NPR1/NH1 and NPR3/NH3.

The protein resides in the nucleus. Transcriptional regulator involved in defense response. The chain is Transcription factor TGAL1 from Oryza sativa subsp. japonica (Rice).